The following is a 444-amino-acid chain: Homocysteine/cysteine synthase (444 aa).

Lys-208 is modified (N6-(pyridoxal phosphate)lysine).

This sequence belongs to the trans-sulfuration enzymes family. Homotetramer. Pyridoxal 5'-phosphate is required as a cofactor.

Its subcellular location is the cytoplasm. It carries out the reaction O-acetyl-L-homoserine + methanethiol = L-methionine + acetate + H(+). The enzyme catalyses O-acetyl-L-homoserine + hydrogen sulfide = L-homocysteine + acetate. The catalysed reaction is O-acetyl-L-serine + hydrogen sulfide = L-cysteine + acetate. The protein operates within amino-acid biosynthesis; L-methionine biosynthesis via de novo pathway; L-homocysteine from O-acetyl-L-homoserine. Its pathway is amino-acid biosynthesis; L-cysteine biosynthesis; L-cysteine from L-serine: step 2/2. Functionally, catalyzes the conversion of O-acetyl-L-homoserine (OAH) into homocysteine in the methionine biosynthesis pathway. Also catalyzes the conversion of O-acetylserine (OAS) into cysteine, the last step in the cysteine biosynthesis pathway. The polypeptide is Homocysteine/cysteine synthase (MET17) (Kluyveromyces lactis (strain ATCC 8585 / CBS 2359 / DSM 70799 / NBRC 1267 / NRRL Y-1140 / WM37) (Yeast)).